The primary structure comprises 327 residues: Porphobilinogen deaminase (327 aa).

At Cys-251 the chain carries S-(dipyrrolylmethanemethyl)cysteine.

The protein belongs to the HMBS family. Dipyrromethane serves as cofactor.

The catalysed reaction is 4 porphobilinogen + H2O = hydroxymethylbilane + 4 NH4(+). Its pathway is porphyrin-containing compound metabolism; protoporphyrin-IX biosynthesis; coproporphyrinogen-III from 5-aminolevulinate: step 2/4. Tetrapolymerization of the monopyrrole PBG into the hydroxymethylbilane pre-uroporphyrinogen in several discrete steps. The chain is Porphobilinogen deaminase (HEM3) from Kluyveromyces lactis (strain ATCC 8585 / CBS 2359 / DSM 70799 / NBRC 1267 / NRRL Y-1140 / WM37) (Yeast).